Consider the following 311-residue polypeptide: JNK1/MAPK8-associated membrane protein (311 aa).

Residues M1–D57 lie on the Lumenal side of the membrane. A glycan (N-linked (GlcNAc...) asparagine) is linked at N22. A helical membrane pass occupies residues W58 to W78. The Cytoplasmic portion of the chain corresponds to Y79 to A87. A helical transmembrane segment spans residues L88–V108. At S109–A149 the chain is on the lumenal side. Residues V150–L170 form a helical membrane-spanning segment. At L171–R188 the chain is on the cytoplasmic side. Residues F189–G209 traverse the membrane as a helical segment. Position 210 (G210) is a topological domain, lumenal. The chain crosses the membrane as a helical span at residues G211–V231. Residues Y232–R250 are Cytoplasmic-facing. A helical transmembrane segment spans residues L251–V271. Residues D272–D277 lie on the Lumenal side of the membrane. A helical transmembrane segment spans residues L278 to T298. Over E299 to H311 the chain is Cytoplasmic.

As to quaternary structure, interacts with RNF5 and MAPK8, but not with MAPK9. Binding to MAPK8 occurs before and after exposure to stress, such as UV irradiation. After exposure to stress, interacts with phosphorylated MAPK8. Competes with DUSP10 for MAPK8 binding. Associates with multiple components of the proteasome and with ERAD regulatory proteins including AMFR/GP78, CANX, PSMC1, PSMC2, PSMC3/TBP1, PSMC5, PSMC6, PSMD8, SEC61-ALPHA and UFD1. Interacts with DERL1 (in the presence of misfolded protein CFTR(F508del)). Ubiquitinated by RNF5 via 'Lys-63'-linked ubiquitin linkage in a UBE2N-dependent manner. Ubiquitination decreases association with components of the proteasome and ERAD.

The protein localises to the endoplasmic reticulum membrane. Regulates the duration of MAPK8 activity in response to various stress stimuli. Facilitates degradation of misfolded endoplasmic reticulum (ER) proteins through the recruitment of components of the proteasome and endoplasmic reticulum-associated degradation (ERAD) system. The chain is JNK1/MAPK8-associated membrane protein (JKAMP) from Homo sapiens (Human).